The following is a 590-amino-acid chain: Ovarian abundant message protein (590 aa).

The disordered stretch occupies residues 1–71 (MQGTDNAPPG…SPGQPLVEEQ (71 aa)). Basic residues predominate over residues 18–29 (SPRRIRHVRRHY). Tandem repeats lie at residues 66-71 (PLVEEQ), 72-77 (PLVEER), 78-83 (PPVEEQ), 84-89 (PLVEEQ), 90-95 (PLVEEQ), 96-101 (PLVEEQ), 102-107 (PLVEEQ), 108-113 (PLVEGQ), 114-119 (PLVEEQ), 120-125 (PLVEGQ), 126-131 (PPVEGQ), 132-137 (PLVEEQ), 138-143 (PLVEGQ), 144-149 (PLVEGQ), 150-155 (PLVEGQ), 156-161 (PLVEGQ), 162-167 (PLVGGQ), 168-173 (PLVGGQ), 174-179 (PLVEGQ), 180-185 (PLVEGQ), 300-305 (PLAGAP), 306-311 (PLAGVP), 312-317 (PLAVAL), 318-323 (PLAGAP), 324-329 (PLAGVP), 330-335 (PLAGAP), and 336-341 (PLAGAL). The segment at 66-185 (PLVEEQPLVE…VEGQPLVEGQ (120 aa)) is 20 X 6 AA tandem repeats of P-[LP]-V-[EG]-[EG]-[QR]. The interval 300–347 (PLAGAPPLAGVPPLAVALPLAGAPPLAGVPPLAGAPPLAGALPRAGVL) is 8 X 6 AA approximate tandem repeats of P-L-A-[GV]-[AV]-[PL]. Residues 342–347 (PRAGVL) form a 2-8; approximate repeat. A run of 16 repeats spans residues 348-353 (RRAGVL), 354-359 (RRAGVL), 360-365 (RRAGVL), 366-371 (RRAGVL), 372-377 (RRAGVL), 378-383 (RRAGVL), 384-389 (RRAGVL), 390-395 (RRAGVL), 396-401 (RRAGVL), 402-407 (RRADVL), 408-413 (RRADVV), 419-424 (QQLADV), 425-430 (QRLADV), 431-436 (QRLADV), 437-442 (QRLADV), and 443-448 (QRLADV). The segment at 348–413 (RRAGVLRRAG…ADVLRRADVV (66 aa)) is 11 X 6 AA tandem repeats of approximate R-R-A-[GD]-V-[LV]. The segment at 419–454 (QQLADVQRLADVQRLADVQRLADVQRLADVQRLVCV) is 6 X 6 AA approximate tandem repeats of Q-[QR]-L-A-D-V. Residues 449 to 454 (QRLVCV) form a 4-6; approximate repeat.

Somatic ovarian tissue.

The protein is Ovarian abundant message protein (OAM) of Ascaris suum (Pig roundworm).